The following is a 223-amino-acid chain: Immediate early response gene 2 protein (223 aa).

The residue at position 1 (Met-1) is an N-acetylmethionine. The disordered stretch occupies residues 63 to 172 (AALPSDPRLH…PPAQAEGAFP (110 aa)). Residues 69 to 78 (PRLHPPREAE) show a composition bias toward basic and acidic residues. The span at 125–138 (SSLSDGGDAGLVPS) shows a compositional bias: low complexity.

It belongs to the IER family. In terms of tissue distribution, expressed in activated T-cells (at protein level). Expression increases in metastatic tumor cells (at protein level).

The protein resides in the cytoplasm. It is found in the nucleus. Its function is as follows. DNA-binding protein that seems to act as a transcription factor. Involved in the regulation of neuronal differentiation, acts upon JNK-signaling pathway activation and plays a role in neurite outgrowth in hippocampal cells. May mediate with FIBP FGF-signaling in the establishment of laterality in the embryo. Promotes cell motility, seems to stimulate tumor metastasis. This is Immediate early response gene 2 protein from Homo sapiens (Human).